A 237-amino-acid chain; its full sequence is N-alpha-acetyltransferase 40 (237 aa).

G2 is lipidated: N-myristoyl glycine. In terms of domain architecture, N-acetyltransferase spans 63-216 (SGLEPATVDW…EDCSYEILSR (154 aa)). Residues Y85, 127–129 (DVE), and Y138 contribute to the substrate site. Residues 140-142 (VQL) and 148-153 (RKGLGK) each bind acetyl-CoA. T174 is a substrate binding site. Position 179 (N179) interacts with acetyl-CoA. S197 and Y211 together coordinate substrate.

The protein belongs to the acetyltransferase family. NAA40 subfamily.

It localises to the cytoplasm. The protein localises to the nucleus. It carries out the reaction N-terminal L-seryl-[histone H4] + acetyl-CoA = N-terminal N(alpha)-acetyl-L-seryl-[histone H4] + CoA + H(+). The enzyme catalyses N-terminal L-seryl-[histone H2A] + acetyl-CoA = N-terminal N(alpha)-acetyl-L-seryl-[histone H2A] + CoA + H(+). In terms of biological role, N-alpha-acetyltransferase that specifically mediates the acetylation of the N-terminal residues of histones H4 and H2A. In contrast to other N-alpha-acetyltransferase, has a very specific selectivity for histones H4 and H2A N-terminus and specifically recognizes the 'Ser-Gly-Arg-Gly sequence'. Acts as a negative regulator of apoptosis. May play a role in hepatic lipid metabolism. This chain is N-alpha-acetyltransferase 40, found in Mus musculus (Mouse).